We begin with the raw amino-acid sequence, 494 residues long: Bifunctional NAD(P)H-hydrate repair enzyme Nnr (494 aa).

Residues 1-221 (MDTIMPLPTH…GVEEVFAQHN (221 aa)) are NAD(P)H-hydrate epimerase. Residues 17–219 (LKQGEQDAAS…GLGVEEVFAQ (203 aa)) enclose the YjeF N-terminal domain. Residues 65-69 (NNGGD) form an NADPHX 1; for epimerase activity region. Residues Asn-66 and Asp-129 each coordinate K(+). An NADPHX 1; for epimerase activity region spans residues 133-139 (GIGLKEV). Residue Asp-162 coordinates (6S)-NADPHX. Position 165 (Ser-165) interacts with K(+). The 266-residue stretch at 229–494 (DGKLRHSLLP…LLPHLRELLN (266 aa)) folds into the YjeF C-terminal domain. The segment at 229-494 (DGKLRHSLLP…LLPHLRELLN (266 aa)) is ADP-dependent (S)-NAD(P)H-hydrate dehydratase. Residue Gly-325 participates in (6S)-NADPHX binding. Positions 371–377 (HPVEAAR) are NADPHX 2; for dehydratase activity. ADP is bound by residues 408–412 (KGAGT) and 427–436 (NPGMASGGMG). (6S)-NADPHX is bound at residue Asp-437.

In the N-terminal section; belongs to the NnrE/AIBP family. It in the C-terminal section; belongs to the NnrD/CARKD family. K(+) is required as a cofactor.

It catalyses the reaction (6S)-NADHX + ADP = AMP + phosphate + NADH + H(+). It carries out the reaction (6S)-NADPHX + ADP = AMP + phosphate + NADPH + H(+). The enzyme catalyses (6R)-NADHX = (6S)-NADHX. The catalysed reaction is (6R)-NADPHX = (6S)-NADPHX. Bifunctional enzyme that catalyzes the epimerization of the S- and R-forms of NAD(P)HX and the dehydration of the S-form of NAD(P)HX at the expense of ADP, which is converted to AMP. This allows the repair of both epimers of NAD(P)HX, a damaged form of NAD(P)H that is a result of enzymatic or heat-dependent hydration. The protein is Bifunctional NAD(P)H-hydrate repair enzyme Nnr (nnr) of Vibrio cholerae serotype O1 (strain ATCC 39315 / El Tor Inaba N16961).